The chain runs to 224 residues: Thiamine-phosphate synthase (224 aa).

Residues 44 to 48 and N79 contribute to the 4-amino-2-methyl-5-(diphosphooxymethyl)pyrimidine site; that span reads QFREK. Positions 80 and 99 each coordinate Mg(2+). A 4-amino-2-methyl-5-(diphosphooxymethyl)pyrimidine-binding site is contributed by S117. Position 143–145 (143–145) interacts with 2-[(2R,5Z)-2-carboxy-4-methylthiazol-5(2H)-ylidene]ethyl phosphate; that stretch reads TET. K146 contacts 4-amino-2-methyl-5-(diphosphooxymethyl)pyrimidine. 2-[(2R,5Z)-2-carboxy-4-methylthiazol-5(2H)-ylidene]ethyl phosphate contacts are provided by residues G175 and 195-196; that span reads IS.

Belongs to the thiamine-phosphate synthase family. It depends on Mg(2+) as a cofactor.

It carries out the reaction 2-[(2R,5Z)-2-carboxy-4-methylthiazol-5(2H)-ylidene]ethyl phosphate + 4-amino-2-methyl-5-(diphosphooxymethyl)pyrimidine + 2 H(+) = thiamine phosphate + CO2 + diphosphate. The catalysed reaction is 2-(2-carboxy-4-methylthiazol-5-yl)ethyl phosphate + 4-amino-2-methyl-5-(diphosphooxymethyl)pyrimidine + 2 H(+) = thiamine phosphate + CO2 + diphosphate. The enzyme catalyses 4-methyl-5-(2-phosphooxyethyl)-thiazole + 4-amino-2-methyl-5-(diphosphooxymethyl)pyrimidine + H(+) = thiamine phosphate + diphosphate. Its pathway is cofactor biosynthesis; thiamine diphosphate biosynthesis; thiamine phosphate from 4-amino-2-methyl-5-diphosphomethylpyrimidine and 4-methyl-5-(2-phosphoethyl)-thiazole: step 1/1. Functionally, condenses 4-methyl-5-(beta-hydroxyethyl)thiazole monophosphate (THZ-P) and 2-methyl-4-amino-5-hydroxymethyl pyrimidine pyrophosphate (HMP-PP) to form thiamine monophosphate (TMP). The sequence is that of Thiamine-phosphate synthase from Bacillus velezensis (strain DSM 23117 / BGSC 10A6 / LMG 26770 / FZB42) (Bacillus amyloliquefaciens subsp. plantarum).